The primary structure comprises 278 residues: Dermonecrotic toxin LlSicTox-alphaIII3iii (278 aa).

Residue His5 is part of the active site. Mg(2+) contacts are provided by Glu25 and Asp27. The Nucleophile role is filled by His40. Cys44 and Cys50 are joined by a disulfide. Asp84 contributes to the Mg(2+) binding site.

The protein belongs to the arthropod phospholipase D family. Class I subfamily. Requires Mg(2+) as cofactor. Expressed by the venom gland.

It is found in the secreted. It carries out the reaction an N-(acyl)-sphingosylphosphocholine = an N-(acyl)-sphingosyl-1,3-cyclic phosphate + choline. It catalyses the reaction an N-(acyl)-sphingosylphosphoethanolamine = an N-(acyl)-sphingosyl-1,3-cyclic phosphate + ethanolamine. The catalysed reaction is a 1-acyl-sn-glycero-3-phosphocholine = a 1-acyl-sn-glycero-2,3-cyclic phosphate + choline. The enzyme catalyses a 1-acyl-sn-glycero-3-phosphoethanolamine = a 1-acyl-sn-glycero-2,3-cyclic phosphate + ethanolamine. Dermonecrotic toxins cleave the phosphodiester linkage between the phosphate and headgroup of certain phospholipids (sphingolipid and lysolipid substrates), forming an alcohol (often choline) and a cyclic phosphate. This toxin acts on sphingomyelin (SM). It may also act on ceramide phosphoethanolamine (CPE), lysophosphatidylcholine (LPC) and lysophosphatidylethanolamine (LPE), but not on lysophosphatidylserine (LPS), and lysophosphatidylglycerol (LPG). It acts by transphosphatidylation, releasing exclusively cyclic phosphate products as second products. Induces dermonecrosis, hemolysis, increased vascular permeability, edema, inflammatory response, and platelet aggregation. This Loxosceles laeta (South American recluse spider) protein is Dermonecrotic toxin LlSicTox-alphaIII3iii.